Reading from the N-terminus, the 224-residue chain is A-factor barrier protein 1 (224 aa).

The N-terminal stretch at 1-25 is a signal peptide; the sequence is MIFAPSFSLIKNILLVSFLISHSFA. N-linked (GlcNAc...) asparagine glycans are attached at residues N148, N181, and N191. N203 is lipidated: GPI-anchor amidated asparagine. Positions 204 to 224 are cleaved as a propeptide — removed in mature form; it reads GAHAKSLYFPMALFGIFAVAL.

The protein belongs to the SRP1/TIP1 family. In terms of processing, the GPI-anchor is attached to the protein in the endoplasmic reticulum and serves to target the protein to the cell surface. There, the glucosamine-inositol phospholipid moiety is cleaved off and the GPI-modified mannoprotein is covalently attached via its lipidless GPI glycan remnant to the 1,6-beta-glucan of the outer cell wall layer.

The protein resides in the secreted. It localises to the cell wall. It is found in the membrane. Functionally, MATalpha-specific protein that interferes with a-factor, the pheromone secreted by MATa cells. Contributes to mating efficiency. Acts to bind and sequester a-factor rather than to degrade it, and promotes the efficient mating of MATalpha cells by keeping the a-factor concentration at the plasma membrane within the narrow range needed for accurate pheromone gradient detection. In Saccharomyces cerevisiae (strain ATCC 204508 / S288c) (Baker's yeast), this protein is A-factor barrier protein 1.